A 125-amino-acid chain; its full sequence is Small ribosomal subunit protein uS12m (125 aa).

The segment at 1–24 is disordered; the sequence is MPTSNQSIRHGREKKRRTDRTRAL. Basic residues predominate over residues 9 to 19; the sequence is RHGREKKRRTD.

This sequence belongs to the universal ribosomal protein uS12 family.

It is found in the mitochondrion. Protein S12 is involved in the translation initiation step. The sequence is that of Small ribosomal subunit protein uS12m (RPS12) from Pinus sylvestris (Scotch pine).